The sequence spans 373 residues: Peptide chain release factor 2 (373 aa).

Q251 carries the post-translational modification N5-methylglutamine.

This sequence belongs to the prokaryotic/mitochondrial release factor family. Methylated by PrmC. Methylation increases the termination efficiency of RF2.

The protein resides in the cytoplasm. Functionally, peptide chain release factor 2 directs the termination of translation in response to the peptide chain termination codons UGA and UAA. This Salinispora tropica (strain ATCC BAA-916 / DSM 44818 / JCM 13857 / NBRC 105044 / CNB-440) protein is Peptide chain release factor 2.